Consider the following 586-residue polypeptide: Arginine--tRNA ligase (586 aa).

The short motif at 131–141 is the 'HIGH' region element; sequence ANPTGPLHVGH.

Belongs to the class-I aminoacyl-tRNA synthetase family. As to quaternary structure, monomer.

The protein localises to the cytoplasm. It carries out the reaction tRNA(Arg) + L-arginine + ATP = L-arginyl-tRNA(Arg) + AMP + diphosphate. The protein is Arginine--tRNA ligase of Nitrosomonas eutropha (strain DSM 101675 / C91 / Nm57).